The chain runs to 721 residues: Vacuolar transporter chaperone complex subunit 4 (721 aa).

Residues 1–146 (MKFGQLLKET…GWILKPVFAA (146 aa)) enclose the SPX domain. At 1-631 (MKFGQLLKET…KTYFALERTY (631 aa)) the chain is on the cytoplasmic side. Residues K198, R262, R264, K279, K292, Y357, and R359 each contribute to the ATP site. E421 lines the Mn(2+) pocket. K453 is a catalytic residue. Composition is skewed to polar residues over residues 490–513 (QGRSQSGTHSSSVSANVLTDSENT) and 529–547 (IGSSSTRNDNSTFQTSDSF). Residues 490-547 (QGRSQSGTHSSSVSANVLTDSENTPIHADGDNYVDEESRIGSSSTRNDNSTFQTSDSF) are disordered. At S495 the chain carries Phosphoserine. T497 carries the post-translational modification Phosphothreonine. At S501 the chain carries Phosphoserine. Residue T534 is modified to Phosphothreonine. S546 carries the phosphoserine modification. Residues 632-652 (LDYLRYSILMGSIGITLFSFA) form a helical membrane-spanning segment. Residues 653-657 (KTRSG) lie on the Vacuolar side of the membrane. Residues 658–678 (ILGAASFTLVALFAIFYSTFL) form a helical membrane-spanning segment. At 679 to 697 (YLWRAVNIAKHNAVRYDDR) the chain is on the cytoplasmic side. A helical transmembrane segment spans residues 698–718 (FGPTAICVITFAAISANVILN). The Vacuolar segment spans residues 719–721 (FNA).

It belongs to the VTC4 family. As to quaternary structure, the VTC core complex is an integral membrane heterooligomer composed of at least the catalytic subunit vtc4 and the accessory subunits vtc1 and vtc2. vtc1 is a small membrane protein without hydrophilic domain. Vtc2 and vtc4 are related and have 2 hydrophilic domains that face the cytosol, an N-terminal SPX domain and the central core domain. The central core in vtc4 is the catalytic domain. It depends on Mn(2+) as a cofactor.

It is found in the vacuole membrane. It catalyses the reaction [phosphate](n) + ATP = [phosphate](n+1) + ADP. Its activity is regulated as follows. Activity of the enzyme is Mn(2+)-dependent and enhanced in the presence of pyrophosphate (PPi). Functionally, catalytic subunit of the vacuolar transporter chaperone (VTC) complex. The VTC complex acts as a vacuolar polyphosphate polymerase that catalyzes the synthesis of inorganic polyphosphate (polyP) via transfer of phosphate from ATP to a growing polyP chain, releasing ADP. VTC exposes its catalytic domain vtc4 to the cytosol, where the growing polyP chain winds through a tunnel-shaped pocket, integrating cytoplasmic polymer synthesis with polyP membrane translocation. The VTC complex carries 9 vacuolar transmembrane domains, which are likely to constitute the translocation channel into the organelle lumen. PolyP synthesis is tightly coupled to its transport into the vacuole lumen, in order to avoid otherwise toxic intermediates in the cytosol, and it depends on the proton gradient across the membrane, formed by V-ATPase. The VTC complex also plays a role in vacuolar membrane fusion. This is Vacuolar transporter chaperone complex subunit 4 (vtc4) from Schizosaccharomyces pombe (strain 972 / ATCC 24843) (Fission yeast).